Here is a 125-residue protein sequence, read N- to C-terminus: S-adenosylmethionine decarboxylase proenzyme (125 aa).

Serine 63 (schiff-base intermediate with substrate; via pyruvic acid) is an active-site residue. Position 63 is a pyruvic acid (Ser); by autocatalysis (serine 63). Histidine 68 functions as the Proton acceptor; for processing activity in the catalytic mechanism. The active-site Proton donor; for catalytic activity is cysteine 83.

Belongs to the prokaryotic AdoMetDC family. Type 1 subfamily. As to quaternary structure, heterotetramer of two alpha and two beta chains arranged as a dimer of alpha/beta heterodimers. It depends on pyruvate as a cofactor. Post-translationally, is synthesized initially as an inactive proenzyme. Formation of the active enzyme involves a self-maturation process in which the active site pyruvoyl group is generated from an internal serine residue via an autocatalytic post-translational modification. Two non-identical subunits are generated from the proenzyme in this reaction, and the pyruvate is formed at the N-terminus of the alpha chain, which is derived from the carboxyl end of the proenzyme. The post-translation cleavage follows an unusual pathway, termed non-hydrolytic serinolysis, in which the side chain hydroxyl group of the serine supplies its oxygen atom to form the C-terminus of the beta chain, while the remainder of the serine residue undergoes an oxidative deamination to produce ammonia and the pyruvoyl group blocking the N-terminus of the alpha chain.

It catalyses the reaction S-adenosyl-L-methionine + H(+) = S-adenosyl 3-(methylsulfanyl)propylamine + CO2. The protein operates within amine and polyamine biosynthesis; S-adenosylmethioninamine biosynthesis; S-adenosylmethioninamine from S-adenosyl-L-methionine: step 1/1. Its function is as follows. Catalyzes the decarboxylation of S-adenosylmethionine to S-adenosylmethioninamine (dcAdoMet), the propylamine donor required for the synthesis of the polyamines spermine and spermidine from the diamine putrescine. The polypeptide is S-adenosylmethionine decarboxylase proenzyme (Moorella thermoacetica (strain ATCC 39073 / JCM 9320)).